Consider the following 111-residue polypeptide: Large ribosomal subunit protein P1 (111 aa).

Positions 65 to 89 (SGAGSGPAPAAAAAAPAAGGAAPAA) are enriched in low complexity. The interval 65 to 111 (SGAGSGPAPAAAAAAPAAGGAAPAAETKKKEEPKEESDDDMGFGLFD) is disordered.

It belongs to the eukaryotic ribosomal protein P1/P2 family. As to quaternary structure, P1 and P2 exist as dimers at the large ribosomal subunit.

In terms of biological role, plays an important role in the elongation step of protein synthesis. The protein is Large ribosomal subunit protein P1 of Caenorhabditis elegans.